The chain runs to 779 residues: Nucleolar complex protein 3 homolog (779 aa).

Disordered regions lie at residues 1–20 (MGFA…TNKT) and 100–189 (NAKR…SHLS). Residues 114 to 124 (DSDEDEDEDDV) show a composition bias toward acidic residues. Basic and acidic residues predominate over residues 136 to 160 (EEGHEELLPIKLKDGTLIRPTREKE). The span at 161–178 (VEEQEEEEKSDIDEGEED) shows a compositional bias: acidic residues. The stretch at 434–474 (AKKYQIKKERASKTAKKYKKQLARLEADLLEVEAEESLTKK) forms a coiled coil.

This sequence belongs to the CBF/MAK21 family.

It localises to the nucleus. Its subcellular location is the nucleolus. In Caenorhabditis briggsae, this protein is Nucleolar complex protein 3 homolog.